A 66-amino-acid chain; its full sequence is Large ribosomal subunit protein bL33c (66 aa).

This sequence belongs to the bacterial ribosomal protein bL33 family.

The protein resides in the plastid. It localises to the chloroplast. The sequence is that of Large ribosomal subunit protein bL33c from Eucalyptus globulus subsp. globulus (Tasmanian blue gum).